The primary structure comprises 271 residues: Formamidopyrimidine-DNA glycosylase (271 aa).

Catalysis depends on P2, which acts as the Schiff-base intermediate with DNA. The active-site Proton donor is the E3. The Proton donor; for beta-elimination activity role is filled by K58. 3 residues coordinate DNA: H91, R110, and R152. The FPG-type zinc-finger motif lies at 237–271; that stretch reads RAYGRGGQPCTVCQTELKEIKLGQRTSVFCPSCQR. R261 functions as the Proton donor; for delta-elimination activity in the catalytic mechanism.

Belongs to the FPG family. In terms of assembly, monomer. Requires Zn(2+) as cofactor.

The catalysed reaction is Hydrolysis of DNA containing ring-opened 7-methylguanine residues, releasing 2,6-diamino-4-hydroxy-5-(N-methyl)formamidopyrimidine.. It catalyses the reaction 2'-deoxyribonucleotide-(2'-deoxyribose 5'-phosphate)-2'-deoxyribonucleotide-DNA = a 3'-end 2'-deoxyribonucleotide-(2,3-dehydro-2,3-deoxyribose 5'-phosphate)-DNA + a 5'-end 5'-phospho-2'-deoxyribonucleoside-DNA + H(+). Functionally, involved in base excision repair of DNA damaged by oxidation or by mutagenic agents. Acts as a DNA glycosylase that recognizes and removes damaged bases. Has a preference for oxidized purines, such as 7,8-dihydro-8-oxoguanine (8-oxoG). Has AP (apurinic/apyrimidinic) lyase activity and introduces nicks in the DNA strand. Cleaves the DNA backbone by beta-delta elimination to generate a single-strand break at the site of the removed base with both 3'- and 5'-phosphates. The polypeptide is Formamidopyrimidine-DNA glycosylase (Hahella chejuensis (strain KCTC 2396)).